A 322-amino-acid polypeptide reads, in one-letter code: tRNA-dihydrouridine synthase B (322 aa).

Residues 16-18 (PMA) and Gln70 each bind FMN. Cys100 (proton donor) is an active-site residue. Residues Lys139, 200-202 (NGD), and 224-225 (GR) each bind FMN.

This sequence belongs to the Dus family. DusB subfamily. The cofactor is FMN.

The catalysed reaction is a 5,6-dihydrouridine in tRNA + NAD(+) = a uridine in tRNA + NADH + H(+). The enzyme catalyses a 5,6-dihydrouridine in tRNA + NADP(+) = a uridine in tRNA + NADPH + H(+). In terms of biological role, catalyzes the synthesis of 5,6-dihydrouridine (D), a modified base found in the D-loop of most tRNAs, via the reduction of the C5-C6 double bond in target uridines. This Vibrio parahaemolyticus serotype O3:K6 (strain RIMD 2210633) protein is tRNA-dihydrouridine synthase B.